The primary structure comprises 455 residues: Golgi pH regulator (455 aa).

2 helical membrane-spanning segments follow: residues 5–25 (IDSS…WLFF) and 46–66 (VTFA…LGVL). An N-linked (GlcNAc...) asparagine glycan is attached at N67. Helical transmembrane passes span 79–99 (LCVI…YFVV), 111–131 (LFAC…GDPF), and 150–170 (VGVI…VNCP). N-linked (GlcNAc...) asparagine glycans are attached at residues N180 and N243. 4 helical membrane passes run 290–310 (GYFF…NIVF), 343–363 (ISFI…LITL), 378–398 (VIVL…VLLI), and 425–445 (WFDV…YLAH).

The protein belongs to the Golgi pH regulator (TC 1.A.38) family. As to quaternary structure, homotrimer.

It localises to the golgi apparatus membrane. The catalysed reaction is iodide(out) = iodide(in). The enzyme catalyses chloride(in) = chloride(out). It carries out the reaction bromide(in) = bromide(out). It catalyses the reaction fluoride(in) = fluoride(out). Its function is as follows. Voltage-gated channel that enables the transfer of anions such as iodide, chloride, bromide and fluoride which may function in counter-ion conductance and participates in Golgi acidification. The sequence is that of Golgi pH regulator from Gallus gallus (Chicken).